A 143-amino-acid chain; its full sequence is uncharacterized protein (143 aa).

Residues 4–24 (FGIVALSIICSIAFLFVAYGV) form a helical membrane-spanning segment. Residues 97–143 (TVPFVNTEAPPPRLSSSFSRQSGENAETQSQVSASPFNDKNSPYVQE) form a disordered region. A compositionally biased stretch (polar residues) spans 110–143 (LSSSFSRQSGENAETQSQVSASPFNDKNSPYVQE).

The protein resides in the golgi apparatus membrane. This is an uncharacterized protein from Schizosaccharomyces pombe (strain 972 / ATCC 24843) (Fission yeast).